We begin with the raw amino-acid sequence, 292 residues long: MASTKPASSLIYQAWNKLSINQTIPSDSLELLGERLAIAFAPKLKEQRRNGRRRNLEYVAQHRRKIARKIYLEILEKDPNIFLPFILAVSPRACLSFDISSFLEQHQSQGRHFLRNNAEAILWGLAKKHDIDGSLHFRKLMREIFQLSPPATEAEGKEHYSLHLSTLPAIRNAFGDVIFDAIERSPTQVTARAKGYFSEKTESVWTKVPYRSSQDAIISLEVGSAIELANVLFPIATQKIVSILSACSPTVRQKNFSEAILGPDPQDTPATSSEIGMKFKVHMTAVANSTLC.

Positions Arg-48 to Ile-70 match the Bipartite nuclear localization signal motif. An RNA recognition motif (RRM)-like domain region spans residues Gly-156–Pro-186.

The protein belongs to the hrmA family.

The protein localises to the nucleus. Hypoxia responsive morphology factor that modulates the expression of the subtelomeric hrmA-associated cluster (HAC) containing genes that alter the hyphal surface (such as reduced total chitin or increased beta-glucan exposure) and perturb inter-hyphal interactions within the developing biofilms, resulting in a loss of vertically aligned polarized growing filaments. Consequently, this hypoxia-typic morphotype (called H-MORPH) with altered biofilm architecture leads to increased hypoxia fitness, increased host inflammation, rapid disease progression, and mortality in a murine model of invasive aspergillosis. The chain is Hypoxia responsive morphology factor A from Aspergillus fumigatus (strain CBS 144.89 / FGSC A1163 / CEA10) (Neosartorya fumigata).